Here is a 457-residue protein sequence, read N- to C-terminus: Chromosomal replication initiator protein DnaA (457 aa).

Residues M1–M77 form a domain I, interacts with DnaA modulators region. Residues M77–T108 are domain II. A domain III, AAA+ region region spans residues S109–A323. ATP contacts are provided by G153, G155, K156, and T157. The interval N324–E457 is domain IV, binds dsDNA.

Belongs to the DnaA family. As to quaternary structure, oligomerizes as a right-handed, spiral filament on DNA at oriC.

The protein resides in the cytoplasm. In terms of biological role, plays an essential role in the initiation and regulation of chromosomal replication. ATP-DnaA binds to the origin of replication (oriC) to initiate formation of the DNA replication initiation complex once per cell cycle. Binds the DnaA box (a 9 base pair repeat at the origin) and separates the double-stranded (ds)DNA. Forms a right-handed helical filament on oriC DNA; dsDNA binds to the exterior of the filament while single-stranded (ss)DNA is stabiized in the filament's interior. The ATP-DnaA-oriC complex binds and stabilizes one strand of the AT-rich DNA unwinding element (DUE), permitting loading of DNA polymerase. After initiation quickly degrades to an ADP-DnaA complex that is not apt for DNA replication. Binds acidic phospholipids. The polypeptide is Chromosomal replication initiator protein DnaA (Helicobacter pylori (strain J99 / ATCC 700824) (Campylobacter pylori J99)).